The primary structure comprises 209 residues: ATP-dependent dethiobiotin synthetase BioD (209 aa).

Residue aspartate 13–valine 18 coordinates ATP. Threonine 17 provides a ligand contact to Mg(2+). The active site involves lysine 33. Glutamate 100 serves as a coordination point for Mg(2+). Residues glutamate 100–glycine 103 and proline 184–leucine 186 each bind ATP.

This sequence belongs to the dethiobiotin synthetase family. As to quaternary structure, homodimer. Mg(2+) serves as cofactor.

Its subcellular location is the cytoplasm. The enzyme catalyses (7R,8S)-7,8-diammoniononanoate + CO2 + ATP = (4R,5S)-dethiobiotin + ADP + phosphate + 3 H(+). It participates in cofactor biosynthesis; biotin biosynthesis; biotin from 7,8-diaminononanoate: step 1/2. Catalyzes a mechanistically unusual reaction, the ATP-dependent insertion of CO2 between the N7 and N8 nitrogen atoms of 7,8-diaminopelargonic acid (DAPA, also called 7,8-diammoniononanoate) to form a ureido ring. This Rhizorhabdus wittichii (strain DSM 6014 / CCUG 31198 / JCM 15750 / NBRC 105917 / EY 4224 / RW1) (Sphingomonas wittichii) protein is ATP-dependent dethiobiotin synthetase BioD.